Here is a 591-residue protein sequence, read N- to C-terminus: V-type ATP synthase alpha chain (591 aa).

242 to 249 (GPFGAGKT) lines the ATP pocket.

The protein belongs to the ATPase alpha/beta chains family.

The catalysed reaction is ATP + H2O + 4 H(+)(in) = ADP + phosphate + 5 H(+)(out). In terms of biological role, produces ATP from ADP in the presence of a proton gradient across the membrane. The V-type alpha chain is a catalytic subunit. The sequence is that of V-type ATP synthase alpha chain (atpA) from Chlamydia muridarum (strain MoPn / Nigg).